Consider the following 136-residue polypeptide: Small ribosomal subunit protein uS19 (136 aa).

It belongs to the universal ribosomal protein uS19 family.

Its function is as follows. Protein S19 forms a complex with S13 that binds strongly to the 16S ribosomal RNA. The chain is Small ribosomal subunit protein uS19 from Methanosarcina mazei (strain ATCC BAA-159 / DSM 3647 / Goe1 / Go1 / JCM 11833 / OCM 88) (Methanosarcina frisia).